Here is a 340-residue protein sequence, read N- to C-terminus: DNA-directed RNA polymerase subunit alpha (340 aa).

An alpha N-terminal domain (alpha-NTD) region spans residues Met-1–Asn-226. Residues Leu-243–Tyr-340 form an alpha C-terminal domain (alpha-CTD) region.

This sequence belongs to the RNA polymerase alpha chain family. As to quaternary structure, homodimer. The RNAP catalytic core consists of 2 alpha, 1 beta, 1 beta' and 1 omega subunit. When a sigma factor is associated with the core the holoenzyme is formed, which can initiate transcription. In terms of processing, the last 19 amino acids in the C-terminal part are cleaved in the spore.

It carries out the reaction RNA(n) + a ribonucleoside 5'-triphosphate = RNA(n+1) + diphosphate. Its function is as follows. DNA-dependent RNA polymerase catalyzes the transcription of DNA into RNA using the four ribonucleoside triphosphates as substrates. This chain is DNA-directed RNA polymerase subunit alpha, found in Streptomyces granaticolor.